Reading from the N-terminus, the 147-residue chain is Large ribosomal subunit protein uL23A (147 aa).

Positions 1-10 (MAPSAPAKTA) are enriched in low complexity. Residues 1–29 (MAPSAPAKTAKALDAKKKVVKGKRTTHRR) are disordered. The segment covering 18 to 29 (KVVKGKRTTHRR) has biased composition (basic residues).

This sequence belongs to the universal ribosomal protein uL23 family.

Its function is as follows. This protein binds to a specific region on the 26S rRNA. This Caenorhabditis elegans protein is Large ribosomal subunit protein uL23A.